We begin with the raw amino-acid sequence, 61 residues long: Small ribosomal subunit protein uS14 (61 aa).

The Zn(2+) site is built by C24, C27, C40, and C43.

This sequence belongs to the universal ribosomal protein uS14 family. Zinc-binding uS14 subfamily. Part of the 30S ribosomal subunit. Contacts proteins S3 and S10. It depends on Zn(2+) as a cofactor.

Its function is as follows. Binds 16S rRNA, required for the assembly of 30S particles and may also be responsible for determining the conformation of the 16S rRNA at the A site. The polypeptide is Small ribosomal subunit protein uS14 (Frankia alni (strain DSM 45986 / CECT 9034 / ACN14a)).